We begin with the raw amino-acid sequence, 128 residues long: Pi-hexatoxin-Hi1c (128 aa).

Positions 1 to 19 (MKLRITLALTSVLAFCVFG) are cleaved as a signal peptide. Positions 20 to 47 (DKENENLMENLLEDDLLDIFTDAIHMER) are excised as a propeptide. Intrachain disulfides connect C54/C69, C61/C74, C68/C84, C93/C108, C100/C113, and C107/C124. 2 Domain repeats span residues 54–84 (CIAKWKSCAGRKLDCCEGLECWKRRWGHEVC) and 93–124 (CLEKWKSCFERKYDCCEELECWERRGNKHPVC). The segment at 54–124 (CIAKWKSCAG…ERRGNKHPVC (71 aa)) is 2 X approximate repeats with cysteine pattern C-C-CC-C-C.

This sequence belongs to the psalmotoxin-1 family. Double-knot toxin subfamily. Expressed by the venom gland.

It is found in the secreted. This toxin potently and selectively inhibits ASIC1a, an isoform of the gene ASIC1. It incompletely inhibits ASIC1a activation in a pH-independent and slowly reversible manner. This toxin acts by binding to and stabilizing the closed state of the channel, thereby impeding the transition into a conducting state. This toxin may bind to the acidic pocket of ASIC1a, since mutation of a key residue of this pocket (Arg-350) abolishes the ability of the toxin to inhibit ASIC1a. In vivo, this toxin protects the brain from neuronal injury when administered up to 8 hours after stroke onset. The sequence is that of Pi-hexatoxin-Hi1c from Hadronyche infensa (Fraser island funnel-web spider).